The sequence spans 96 residues: Co-chaperonin GroES (96 aa).

This sequence belongs to the GroES chaperonin family. As to quaternary structure, heptamer of 7 subunits arranged in a ring. Interacts with the chaperonin GroEL.

The protein resides in the cytoplasm. Functionally, together with the chaperonin GroEL, plays an essential role in assisting protein folding. The GroEL-GroES system forms a nano-cage that allows encapsulation of the non-native substrate proteins and provides a physical environment optimized to promote and accelerate protein folding. GroES binds to the apical surface of the GroEL ring, thereby capping the opening of the GroEL channel. This is Co-chaperonin GroES from Acinetobacter baylyi (strain ATCC 33305 / BD413 / ADP1).